A 389-amino-acid chain; its full sequence is Phosphatidylglycerol--prolipoprotein diacylglyceryl transferase (389 aa).

The next 4 membrane-spanning stretches (helical) occupy residues 28 to 48 (IIVA…LIYF), 58 to 78 (FFIF…YFLI), 98 to 118 (LAIQ…FNVF), and 148 to 168 (ISVF…QAIG). Residue Arg169 participates in a 1,2-diacyl-sn-glycero-3-phospho-(1'-sn-glycerol) binding. 3 helical membrane-spanning segments follow: residues 220–240 (IPLF…IYFV), 281–301 (IVFS…CQTL), and 309–329 (FWTY…TTLF).

The protein belongs to the Lgt family.

The protein resides in the cell membrane. The catalysed reaction is L-cysteinyl-[prolipoprotein] + a 1,2-diacyl-sn-glycero-3-phospho-(1'-sn-glycerol) = an S-1,2-diacyl-sn-glyceryl-L-cysteinyl-[prolipoprotein] + sn-glycerol 1-phosphate + H(+). Its pathway is protein modification; lipoprotein biosynthesis (diacylglyceryl transfer). In terms of biological role, catalyzes the transfer of the diacylglyceryl group from phosphatidylglycerol to the sulfhydryl group of the N-terminal cysteine of a prolipoprotein, the first step in the formation of mature lipoproteins. The polypeptide is Phosphatidylglycerol--prolipoprotein diacylglyceryl transferase (Mycoplasma pneumoniae (strain ATCC 29342 / M129 / Subtype 1) (Mycoplasmoides pneumoniae)).